The chain runs to 785 residues: Polyribonucleotide nucleotidyltransferase (785 aa).

Positions 516 and 522 each coordinate Mg(2+). The 60-residue stretch at 582–641 (PRVTTVKIPVDKIGMVIGPKGQTINAIQDETGAEISIEDDGTIYVGATNGPAAQAAVERI) folds into the KH domain. Residues 653-722 (GDRFLGTVVK…QRGKIYLDKV (70 aa)) enclose the S1 motif domain. Residues 722 to 785 (VRPEGAEAPA…SRPRRRTRRS (64 aa)) are disordered. The segment covering 734–764 (AAERPAGRDRGDRGPRDRGDRGGRGPDRGDS) has biased composition (basic and acidic residues).

It belongs to the polyribonucleotide nucleotidyltransferase family. Mg(2+) serves as cofactor.

It localises to the cytoplasm. The catalysed reaction is RNA(n+1) + phosphate = RNA(n) + a ribonucleoside 5'-diphosphate. Its function is as follows. Involved in mRNA degradation. Catalyzes the phosphorolysis of single-stranded polyribonucleotides processively in the 3'- to 5'-direction. The protein is Polyribonucleotide nucleotidyltransferase of Salinispora tropica (strain ATCC BAA-916 / DSM 44818 / JCM 13857 / NBRC 105044 / CNB-440).